A 312-amino-acid chain; its full sequence is tRNA dimethylallyltransferase (312 aa).

Position 18–25 (18–25 (GPTASGKS)) interacts with ATP. 20–25 (TASGKS) contacts substrate. Interaction with substrate tRNA stretches follow at residues 43–46 (DSMQ) and 167–171 (QRILR).

Belongs to the IPP transferase family. Monomer. It depends on Mg(2+) as a cofactor.

The enzyme catalyses adenosine(37) in tRNA + dimethylallyl diphosphate = N(6)-dimethylallyladenosine(37) in tRNA + diphosphate. In terms of biological role, catalyzes the transfer of a dimethylallyl group onto the adenine at position 37 in tRNAs that read codons beginning with uridine, leading to the formation of N6-(dimethylallyl)adenosine (i(6)A). The chain is tRNA dimethylallyltransferase from Azorhizobium caulinodans (strain ATCC 43989 / DSM 5975 / JCM 20966 / LMG 6465 / NBRC 14845 / NCIMB 13405 / ORS 571).